The chain runs to 192 residues: uncharacterized protein (192 aa).

The signal sequence occupies residues 1–17; it reads MFLHLILLAGLAPVVYL.

This is an uncharacterized protein from Caenorhabditis elegans.